A 118-amino-acid chain; its full sequence is Ribonuclease P protein component (118 aa).

This sequence belongs to the RnpA family. As to quaternary structure, consists of a catalytic RNA component (M1 or rnpB) and a protein subunit.

It carries out the reaction Endonucleolytic cleavage of RNA, removing 5'-extranucleotides from tRNA precursor.. Its function is as follows. RNaseP catalyzes the removal of the 5'-leader sequence from pre-tRNA to produce the mature 5'-terminus. It can also cleave other RNA substrates such as 4.5S RNA. The protein component plays an auxiliary but essential role in vivo by binding to the 5'-leader sequence and broadening the substrate specificity of the ribozyme. The sequence is that of Ribonuclease P protein component from Levilactobacillus brevis (strain ATCC 367 / BCRC 12310 / CIP 105137 / JCM 1170 / LMG 11437 / NCIMB 947 / NCTC 947) (Lactobacillus brevis).